A 406-amino-acid polypeptide reads, in one-letter code: S-adenosylmethionine synthase (406 aa).

Residue His-17 coordinates ATP. Position 19 (Asp-19) interacts with Mg(2+). Glu-45 is a binding site for K(+). 2 residues coordinate L-methionine: Glu-58 and Gln-101. Positions 101–111 (QSAEINQGVAR) are flexible loop. Residues 178 to 180 (DGK), Asp-258, 264 to 265 (RK), Ala-281, and Lys-285 each bind ATP. Asp-258 contributes to the L-methionine binding site. Lys-289 provides a ligand contact to L-methionine.

It belongs to the AdoMet synthase family. In terms of assembly, homotetramer; dimer of dimers. Requires Mg(2+) as cofactor. K(+) is required as a cofactor.

It localises to the cytoplasm. The catalysed reaction is L-methionine + ATP + H2O = S-adenosyl-L-methionine + phosphate + diphosphate. Its pathway is amino-acid biosynthesis; S-adenosyl-L-methionine biosynthesis; S-adenosyl-L-methionine from L-methionine: step 1/1. In terms of biological role, catalyzes the formation of S-adenosylmethionine (AdoMet) from methionine and ATP. The overall synthetic reaction is composed of two sequential steps, AdoMet formation and the subsequent tripolyphosphate hydrolysis which occurs prior to release of AdoMet from the enzyme. This is S-adenosylmethionine synthase from Bifidobacterium longum (strain NCC 2705).